Reading from the N-terminus, the 260-residue chain is uncharacterized protein (260 aa).

This is an uncharacterized protein from Bacillus subtilis (strain 168).